A 379-amino-acid chain; its full sequence is uncharacterized protein (379 aa).

It belongs to the herpesviridae US22 family.

This is an uncharacterized protein from Human cytomegalovirus (strain AD169) (HHV-5).